A 607-amino-acid polypeptide reads, in one-letter code: Albumin B (607 aa).

The signal sequence occupies residues 1–18 (MKWITLICLLISSSFIES). The propeptide occupies 19–24 (RILFKR). 3 Albumin domains span residues 22–209 (FKRD…KQLM), 210–402 (KQSH…RFMN), and 403–600 (EAKE…VLIE). H30 contacts Cu cation. Cystine bridges form between C80-C88, C101-C117, C116-C127, C147-C192, C191-C200, C223-C269, C268-C276, C288-C302, C301-C312, C339-C384, C383-C392, C415-C461, C460-C471, C484-C500, C499-C510, C537-C582, and C581-C590.

The protein belongs to the ALB/AFP/VDB family. Plasma.

Its subcellular location is the secreted. Its function is as follows. Serum albumin, the main protein of plasma, has a good binding capacity for water, Ca(2+), Na(+), K(+), fatty acids, hormones, bilirubin and drugs. Its main function is the regulation of the colloidal osmotic pressure of blood. The sequence is that of Albumin B (alb-b) from Xenopus laevis (African clawed frog).